The sequence spans 268 residues: Hydroxyethylthiazole kinase (268 aa).

Met45 contributes to the substrate binding site. Positions 121 and 167 each coordinate ATP. Position 194 (Gly194) interacts with substrate.

The protein belongs to the Thz kinase family. Requires Mg(2+) as cofactor.

The enzyme catalyses 5-(2-hydroxyethyl)-4-methylthiazole + ATP = 4-methyl-5-(2-phosphooxyethyl)-thiazole + ADP + H(+). The protein operates within cofactor biosynthesis; thiamine diphosphate biosynthesis; 4-methyl-5-(2-phosphoethyl)-thiazole from 5-(2-hydroxyethyl)-4-methylthiazole: step 1/1. Catalyzes the phosphorylation of the hydroxyl group of 4-methyl-5-beta-hydroxyethylthiazole (THZ). This chain is Hydroxyethylthiazole kinase, found in Bacillus thuringiensis subsp. konkukian (strain 97-27).